The chain runs to 231 residues: MKRAVVVFSGGQDSTTCLVQALQQYDEVHCVTFDYGQRHRAEIDVARELALKLGARAHKVLDVTLLNELAVSSLTRDSIPVPDYEPEADGIPNTFVPGRNILFLTLAAIYAYQVKAEAVITGVCETDFSGYPDCRDEFVKVLNHAVSLGMAKDIRFETPLMWIDKAETWALADYYGKLDLVRNETLTCYNGIKGDGCGHCAACNLRANGLNHYLADKPTVMAAMKQKTGLK.

Residue 8 to 18 coordinates ATP; the sequence is FSGGQDSTTCL. Residues cysteine 188, cysteine 197, cysteine 200, and cysteine 203 each coordinate Zn(2+).

This sequence belongs to the QueC family. It depends on Zn(2+) as a cofactor.

It catalyses the reaction 7-carboxy-7-deazaguanine + NH4(+) + ATP = 7-cyano-7-deazaguanine + ADP + phosphate + H2O + H(+). The protein operates within purine metabolism; 7-cyano-7-deazaguanine biosynthesis. Functionally, catalyzes the ATP-dependent conversion of 7-carboxy-7-deazaguanine (CDG) to 7-cyano-7-deazaguanine (preQ(0)). In Escherichia coli O157:H7, this protein is 7-cyano-7-deazaguanine synthase.